The following is a 68-amino-acid chain: Large ribosomal subunit protein uL29 (68 aa).

The protein belongs to the universal ribosomal protein uL29 family.

The chain is Large ribosomal subunit protein uL29 from Parvibaculum lavamentivorans (strain DS-1 / DSM 13023 / NCIMB 13966).